A 510-amino-acid polypeptide reads, in one-letter code: Thermostable carboxypeptidase 1 (510 aa).

The Peptidase M32 domain occupies 3 to 506 (PEAAYQNLLE…FLAYLEKKYA (504 aa)). The short motif at 245 to 247 (HPF) is the HPF element. Residues 255 to 259 (DVRIT) carry the DXRXT motif. His-276 is a Zn(2+) binding site. An HEXXH motif is present at residues 276–280 (HEMGH). Glu-277 serves as the catalytic Proton donor/acceptor. Zn(2+) is bound by residues His-280 and Glu-306. Positions 305-308 (HESQ) match the HES/GQ motif. The I/NRXXA/SD motif lies at 357–362 (IRVEAD). The GXXQDXHW signature appears at 412-419 (GVMQDVHW).

The protein belongs to the peptidase M32 family. As to quaternary structure, homodimer. Zn(2+) is required as a cofactor.

It carries out the reaction Release of a C-terminal amino acid with broad specificity, except for -Pro.. In terms of biological role, broad specificity carboxypetidase that releases amino acids sequentially from the C-terminus, including neutral, aromatic, polar and basic residues, but not Pro. Has lower activity with substrates ending with Gly or Glu. This chain is Thermostable carboxypeptidase 1, found in Thermus thermophilus (strain ATCC 27634 / DSM 579 / HB8).